Here is a 541-residue protein sequence, read N- to C-terminus: Chaperonin GroEL 2 (541 aa).

ATP contacts are provided by residues 29 to 32 (TLGP), 86 to 90 (DGTTT), glycine 413, 478 to 480 (NAA), and aspartate 494.

This sequence belongs to the chaperonin (HSP60) family. In terms of assembly, forms a cylinder of 14 subunits composed of two heptameric rings stacked back-to-back. Interacts with the co-chaperonin GroES.

Its subcellular location is the cytoplasm. It catalyses the reaction ATP + H2O + a folded polypeptide = ADP + phosphate + an unfolded polypeptide.. Its function is as follows. Together with its co-chaperonin GroES, plays an essential role in assisting protein folding. The GroEL-GroES system forms a nano-cage that allows encapsulation of the non-native substrate proteins and provides a physical environment optimized to promote and accelerate protein folding. In Corynebacterium jeikeium (strain K411), this protein is Chaperonin GroEL 2.